The sequence spans 197 residues: Large ribosomal subunit protein bL25 (197 aa).

The protein belongs to the bacterial ribosomal protein bL25 family. CTC subfamily. In terms of assembly, part of the 50S ribosomal subunit; part of the 5S rRNA/L5/L18/L25 subcomplex. Contacts the 5S rRNA. Binds to the 5S rRNA independently of L5 and L18.

Functionally, this is one of the proteins that binds to the 5S RNA in the ribosome where it forms part of the central protuberance. The sequence is that of Large ribosomal subunit protein bL25 from Pseudomonas putida (strain ATCC 700007 / DSM 6899 / JCM 31910 / BCRC 17059 / LMG 24140 / F1).